We begin with the raw amino-acid sequence, 377 residues long: MRLSMRRALLAAGLALALVLAVHLGQRVLECQAVLGGPRGPRRTMRPEQEDLMMVGADHVEYRYGKAMPLIFVGGVPRSGTTLMRAMLDAHPEVRCGEETRIIPRVLAMRQAWSKSGREKLRLDEAGVTDEVLDAAMQAFILEVIAKHGEPARVLCNKDPFTLKSSVYLSRLFPNSKFLLMVRDGRASVHSMITRKVTIAGFDLSSYRDCLTKWNKAIEVMYAQCMEVGRDKCLPVYYEQLVLHPRRSLKVILDFLGIAWSDAVLHHEDLIGKPGGVSLSKIERSTDQVIKPVNLEALSKWTGHIPGDVLRDMAQIAPMLARLGYDPYANPPNYGNPDPIVINNTHRVLKGDYKTPANLKGYFQVNLNSTSSHLGSS.

Residues 1-8 are Cytoplasmic-facing; it reads MRLSMRRA. The chain crosses the membrane as a helical; Signal-anchor for type II membrane protein span at residues 9 to 25; that stretch reads LLAAGLALALVLAVHLG. The Lumenal portion of the chain corresponds to 26–377; the sequence is QRVLECQAVL…NSTSSHLGSS (352 aa). 78–82 serves as a coordination point for 3'-phosphoadenylyl sulfate; that stretch reads RSGTT. Residues Cys96 and Cys156 are joined by a disulfide bond. The Proton donor/acceptor role is filled by Glu99. The interval 101-105 is interaction with peptide substrate; sequence RIIPR. Positions 183, 191, and 195 each coordinate 3'-phosphoadenylyl sulfate. A disulfide bond links Cys225 and Cys233. 3'-phosphoadenylyl sulfate-binding positions include Tyr238, 285–294, and Lys300; that span reads STDQVIKPVN. N-linked (GlcNAc...) asparagine glycans are attached at residues Asn343 and Asn368.

This sequence belongs to the protein sulfotransferase family. As to quaternary structure, homodimer. Can also form heterodimers with TPST1. N-glycosylated.

The protein localises to the golgi apparatus membrane. It catalyses the reaction L-tyrosyl-[protein] + 3'-phosphoadenylyl sulfate = O-sulfo-L-tyrosine-[protein] + adenosine 3',5'-bisphosphate + H(+). Its function is as follows. Catalyzes the O-sulfation of tyrosine residues within acidic motifs of polypeptides, using 3'-phosphoadenylyl sulfate (PAPS) as cosubstrate. The protein is Protein-tyrosine sulfotransferase 2 (TPST2) of Bos taurus (Bovine).